Here is a 706-residue protein sequence, read N- to C-terminus: Elongation factor G (706 aa).

Residues 8–297 (SYVRNIGIGA…AVVDYLPSPN (290 aa)) enclose the tr-type G domain. GTP-binding positions include 17–24 (AHIDAGKT), 95–99 (DTPGH), and 149–152 (NKMD).

The protein belongs to the TRAFAC class translation factor GTPase superfamily. Classic translation factor GTPase family. EF-G/EF-2 subfamily.

The protein localises to the cytoplasm. Catalyzes the GTP-dependent ribosomal translocation step during translation elongation. During this step, the ribosome changes from the pre-translocational (PRE) to the post-translocational (POST) state as the newly formed A-site-bound peptidyl-tRNA and P-site-bound deacylated tRNA move to the P and E sites, respectively. Catalyzes the coordinated movement of the two tRNA molecules, the mRNA and conformational changes in the ribosome. This Orientia tsutsugamushi (strain Boryong) (Rickettsia tsutsugamushi) protein is Elongation factor G.